The chain runs to 274 residues: CDC48-associated ubiquitin-like/zinc finger protein 1 (274 aa).

An AN1-type zinc finger spans residues 12–58 (LDVGKHCAYCRQLDFLPFHCSFCNEDFCSNHRLKEDHHCRWLLEHEE). Zn(2+) contacts are provided by cysteine 18, cysteine 21, cysteine 31, cysteine 34, cysteine 39, histidine 42, histidine 48, and cysteine 50. Positions 170–266 (NRIYIWCYLV…KDLDTLYLVH (97 aa)) are ubiquitin-like. Residue serine 273 is modified to Phosphoserine.

Interacts (via its ubiquitin-like domain) with CDC48 (via N-terminus). Associates with the 26S proteasome. Specifically interacts with the regulatory particle (RP) subunit RPN2. Exposure to arsenite, a known inducer of protein misfolding resulting in accumulation of polyubiquitinated conjugates, enhances the association with the proteoasome. Binds to ubiquitinated proteins conjugated to a 4 or more molecule ubiquitin chain. Binding to ubiquitinated proteins is zinc-dependent.

It is found in the cytoplasm. The protein localises to the nucleus. Promotes efficient arsenite-induced clearance of stress granules (SGs). May have a role in the ubiquitin-proteasome system (UPS) protecting cells from metalloid-induced proteotoxicity. This chain is CDC48-associated ubiquitin-like/zinc finger protein 1, found in Saccharomyces cerevisiae (strain ATCC 204508 / S288c) (Baker's yeast).